A 495-amino-acid chain; its full sequence is AAA-ATPase At2g18193 (495 aa).

A helical membrane pass occupies residues 7-28; sequence FSFSPSSLFSAYASLTGFLMLF. 250-257 is an ATP binding site; that stretch reads GPPGTGKS. The segment at 451-495 is disordered; it reads EVSICKATDDDEKQNGSLGCVKKKKKGGKQKGKGKGKGKAKTYLI. Basic residues predominate over residues 471–495; it reads VKKKKKGGKQKGKGKGKGKAKTYLI.

The protein belongs to the AAA ATPase family. BCS1 subfamily. It depends on Mg(2+) as a cofactor.

It is found in the membrane. It carries out the reaction ATP + H2O = ADP + phosphate + H(+). This chain is AAA-ATPase At2g18193, found in Arabidopsis thaliana (Mouse-ear cress).